We begin with the raw amino-acid sequence, 303 residues long: Glycine--tRNA ligase alpha subunit (303 aa).

The protein belongs to the class-II aminoacyl-tRNA synthetase family. As to quaternary structure, tetramer of two alpha and two beta subunits.

The protein localises to the cytoplasm. It catalyses the reaction tRNA(Gly) + glycine + ATP = glycyl-tRNA(Gly) + AMP + diphosphate. This is Glycine--tRNA ligase alpha subunit from Syntrophomonas wolfei subsp. wolfei (strain DSM 2245B / Goettingen).